The primary structure comprises 570 residues: Urease subunit alpha (570 aa).

Positions 131–570 constitute a Urease domain; that stretch reads GGIDSHIHFI…LPMTQRYFLF (440 aa). 3 residues coordinate Ni(2+): H136, H138, and K219. N6-carboxylysine is present on K219. H221 provides a ligand contact to substrate. Ni(2+)-binding residues include H248 and H274. The Proton donor role is filled by H322. D362 serves as a coordination point for Ni(2+).

The protein belongs to the metallo-dependent hydrolases superfamily. Urease alpha subunit family. Heterotrimer of UreA (gamma), UreB (beta) and UreC (alpha) subunits. Three heterotrimers associate to form the active enzyme. Ni cation serves as cofactor. In terms of processing, carboxylation allows a single lysine to coordinate two nickel ions.

The protein resides in the cytoplasm. It catalyses the reaction urea + 2 H2O + H(+) = hydrogencarbonate + 2 NH4(+). It functions in the pathway nitrogen metabolism; urea degradation; CO(2) and NH(3) from urea (urease route): step 1/1. This Trichodesmium erythraeum (strain IMS101) protein is Urease subunit alpha.